The chain runs to 180 residues: Ribosome-recycling factor (180 aa).

It belongs to the RRF family.

Its subcellular location is the cytoplasm. In terms of biological role, responsible for the release of ribosomes from messenger RNA at the termination of protein biosynthesis. May increase the efficiency of translation by recycling ribosomes from one round of translation to another. The protein is Ribosome-recycling factor of Chlamydia felis (strain Fe/C-56) (Chlamydophila felis).